We begin with the raw amino-acid sequence, 112 residues long: uncharacterized protein (112 aa).

A helical membrane pass occupies residues 82 to 104; the sequence is IFFGFSIIASYFLKFHLLYVILL.

It is found in the membrane. This is an uncharacterized protein from Pasteurella multocida (strain Pm70).